Reading from the N-terminus, the 230-residue chain is Ribosomal RNA small subunit methyltransferase G (230 aa).

S-adenosyl-L-methionine contacts are provided by residues glycine 95, phenylalanine 100, 146–147 (GE), and arginine 159.

The protein belongs to the methyltransferase superfamily. RNA methyltransferase RsmG family.

Its subcellular location is the cytoplasm. In terms of biological role, specifically methylates the N7 position of a guanine in 16S rRNA. This is Ribosomal RNA small subunit methyltransferase G from Parabacteroides distasonis (strain ATCC 8503 / DSM 20701 / CIP 104284 / JCM 5825 / NCTC 11152).